The sequence spans 45 residues: Large ribosomal subunit protein bL36 (45 aa).

It belongs to the bacterial ribosomal protein bL36 family.

This is Large ribosomal subunit protein bL36 from Aliivibrio salmonicida (strain LFI1238) (Vibrio salmonicida (strain LFI1238)).